A 244-amino-acid polypeptide reads, in one-letter code: 1-(5-phosphoribosyl)-5-[(5-phosphoribosylamino)methylideneamino] imidazole-4-carboxamide isomerase (244 aa).

The Proton acceptor role is filled by aspartate 13. Aspartate 132 functions as the Proton donor in the catalytic mechanism.

This sequence belongs to the HisA/HisF family.

It localises to the cytoplasm. It carries out the reaction 1-(5-phospho-beta-D-ribosyl)-5-[(5-phospho-beta-D-ribosylamino)methylideneamino]imidazole-4-carboxamide = 5-[(5-phospho-1-deoxy-D-ribulos-1-ylimino)methylamino]-1-(5-phospho-beta-D-ribosyl)imidazole-4-carboxamide. The protein operates within amino-acid biosynthesis; L-histidine biosynthesis; L-histidine from 5-phospho-alpha-D-ribose 1-diphosphate: step 4/9. The sequence is that of 1-(5-phosphoribosyl)-5-[(5-phosphoribosylamino)methylideneamino] imidazole-4-carboxamide isomerase from Renibacterium salmoninarum (strain ATCC 33209 / DSM 20767 / JCM 11484 / NBRC 15589 / NCIMB 2235).